A 224-amino-acid polypeptide reads, in one-letter code: MSKEIPTPYIWSYQPQTGHAAGASQDYSTQMNWFSAGPSMISHVYGIRDLRNKVLMTQAQITKTPRTIMDPPIWPASMLVQKHATPKTIALPRNHTLEQAMVNCGAQLAGGRQPSPSHIDIKDTMLAGTGIQLGEDIPSVSWIRPDGIFQLGGGSRSSFSPTQAFLTLQQASSTPRTGGVGSYQFVREFVPEVYLNPFSGPPDTFPDQFIPNYDIVTNSVDGYD.

Thr-64 bears the Phosphothreonine; by host mark. Positions 112-154 are excised as a propeptide; the sequence is RQPSPSHIDIKDTMLAGTGIQLGEDIPSVSWIRPDGIFQLGGG.

The protein belongs to the adenoviridae hexon-linking protein family. As to quaternary structure, interacts with the peripentonal hexons as well as the hexons in the facets. Part of a complex composed of the core-capsid bridging protein, the endosome lysis protein VI and the hexon-linking protein VIII; these interactions bridge the virus core to the capsid. Cleaved by the viral protease during virion maturation. May cause the middle segment to be shed from the capsid.

Its subcellular location is the virion. It is found in the host nucleus. In terms of biological role, structural component of the virion that acts as a cement protein on the capsid interior and which glue the peripentonal hexons and group-of-nine hexons together. The polypeptide is Pre-hexon-linking protein VIII (Canine adenovirus serotype 1 (strain CLL) (CAdV-1)).